The sequence spans 96 residues: MKKRCEFLIFGKVQGVGFRRFVKYRVDKLNEESKVLSGNVCNLSDGSVRVIAQGEEEALEKLCKILEIGPIKSEVERIQSREIDIDESLNDFEILR.

Residues 4-96 (RCEFLIFGKV…ESLNDFEILR (93 aa)) enclose the Acylphosphatase-like domain. Catalysis depends on residues R19 and N42.

The protein belongs to the acylphosphatase family.

It carries out the reaction an acyl phosphate + H2O = a carboxylate + phosphate + H(+). This is Acylphosphatase (acyP) from Helicobacter hepaticus (strain ATCC 51449 / 3B1).